The primary structure comprises 114 residues: Mobility group protein 1A (114 aa).

A DNA-binding region (HMG box) is located at residues 5–71 (PKRPLSAYML…EYEKAMKEFE (67 aa)). Positions 69–114 (EFERNGGDKSSGASTKKRGKAAEKKKPAKKSKKKDSEDDEEEDESD) are disordered. Over residues 105–114 (EDDEEEDESD) the composition is skewed to acidic residues.

It belongs to the HMGB family.

The protein localises to the nucleus. It localises to the chromosome. Its function is as follows. Found in condensed chromomeres. Binds preferentially to AT-rich DNA. The polypeptide is Mobility group protein 1A (HMG1A) (Chironomus tentans (Midge)).